The sequence spans 194 residues: MKIGIVTGIPGVGKTTVLSKVKEILEEKKINNKIVNYGDYMLMTAMKLGYVNNRDEMRKLPVEKQKQLQIEAARGIANEAKEGGDGLLFIDTHAVIRTPSGYLPGLPKYVIEEINPRVIFLLEADPKVILDRQKRDTSRSRSDYSDERIISETINFARYAAMASAVLVGATVKIVINVEGDPAVAANEIINSML.

8 to 16 (GIPGVGKTT) is an ATP binding site.

Belongs to the archaeal adenylate kinase family.

The protein resides in the cytoplasm. The enzyme catalyses AMP + ATP = 2 ADP. In Sulfurisphaera tokodaii (strain DSM 16993 / JCM 10545 / NBRC 100140 / 7) (Sulfolobus tokodaii), this protein is Adenylate kinase (adkA).